A 507-amino-acid chain; its full sequence is MEAVELGAHLTLPEVVAVARHGARVVLTPEVRQRVARASEMVERLVRERRPVYGITTGFGKFSDVPISAEQTEALQRNLLMSHACAVGEPLAAEVVRAMLLLRAQALSRGHSGIRAETLEMLVAFLNLGLTPVVPEQGSLGASGDLAPLAHMSLPLIGLGEAVVNGERLSGAEALQRVGLRPLTLTAKEGLALINGTQAMTALGSLGLHDAQVLLKTADIAAAMTAEALGAIPAAWDPRVQALRLHTGQQAAARNLRRLTEGSRLTTRPGQMRTQDPYTLRCLPQVHGASRTAIEHVAQVLDWEMNAVTDNPLLFPDDDEVISGGNFHGQPVALALDYLAIAVAELGDIAERRIERLVNPQLSGLPAFLTRNGGVHSGLMITQYTAASLVSENKVLAHPASVDSIPSSANQEDHVSMGTTAARKARQVIANVRRVLAIELLCAAQALEFVGPERLAPATRAAYAAIRERVAPLSGDRVLAPDIEALAELVHNGELVAAVEAVAGPLE.

Positions 142–144 (ASG) form a cross-link, 5-imidazolinone (Ala-Gly). S143 carries the 2,3-didehydroalanine (Ser) modification.

The protein belongs to the PAL/histidase family. Contains an active site 4-methylidene-imidazol-5-one (MIO), which is formed autocatalytically by cyclization and dehydration of residues Ala-Ser-Gly.

It localises to the cytoplasm. The enzyme catalyses L-histidine = trans-urocanate + NH4(+). It participates in amino-acid degradation; L-histidine degradation into L-glutamate; N-formimidoyl-L-glutamate from L-histidine: step 1/3. The protein is Histidine ammonia-lyase of Symbiobacterium thermophilum (strain DSM 24528 / JCM 14929 / IAM 14863 / T).